Reading from the N-terminus, the 259-residue chain is Ribonuclease PH (259 aa).

Phosphate-binding positions include Arg-88 and 126–128 (GTR).

Belongs to the RNase PH family. As to quaternary structure, homohexameric ring arranged as a trimer of dimers.

The enzyme catalyses tRNA(n+1) + phosphate = tRNA(n) + a ribonucleoside 5'-diphosphate. Its function is as follows. Phosphorolytic 3'-5' exoribonuclease that plays an important role in tRNA 3'-end maturation. Removes nucleotide residues following the 3'-CCA terminus of tRNAs; can also add nucleotides to the ends of RNA molecules by using nucleoside diphosphates as substrates, but this may not be physiologically important. Probably plays a role in initiation of 16S rRNA degradation (leading to ribosome degradation) during starvation. This is Ribonuclease PH from Mycobacterium leprae (strain Br4923).